Consider the following 1052-residue polypeptide: Malignant fibrous histiocytoma-amplified sequence 1 (1052 aa).

The residue at position 2 (A2) is an N-acetylalanine. LRR repeat units lie at residues 64-85, 88-109, 112-133, 136-157, 159-180, 182-203, 205-226, 228-249, 251-272, 274-296, 297-318, 320-341, and 343-364; these read DIEA…LGSA, SLRV…VAEL, HLTE…VVSA, ELRK…LGAL, HLEE…LSCL, RLRT…LLQL, ALEE…ISAL, ALKI…FCEL, SLES…FSCL, RLKM…LPLA, GLEE…ISGL, RLLT…IVEL, and GLEE…FGQL. Residues 64 to 364 are required for interaction with PJA2; that stretch reads DIEALNLGNN…AVLPDHFGQL (301 aa). Residues 64 to 649 form a required for interaction with PPP2R2A region; sequence DIEALNLGNN…DKLLSVAEHR (586 aa). One can recognise a Roc domain in the interval 403-649; the sequence is QPAVQPRLKL…DKLLSVAEHR (247 aa). K601 bears the N6-acetyllysine mark.

Interacts with RAF1. Interacts with HSPD1. Interacts with PPP2CA; retains PPP2CA into the cytoplasm and excludes it from the nucleus. Interacts with PPP2R2A; the interaction is direct. Interacts with PJA2. Ubiquitinated. Ubiquitination by PJA2 does not lead MFHAS1 to proteasomal degradation but positively regulates its function in polarization of macrophages. Ubiquitously expressed. Overexpressed in malignant fibrous histiocytomas. Expressed in red blood cells (at protein level).

Its subcellular location is the cytoplasm. In terms of biological role, probable GTP-binding protein. Functions in innate immunity and more specifically the inflammatory response as a regulator of the Toll-like receptor TLR2 and TLR4 signaling pathways. Negatively regulates the part of the TLR4 signaling pathway that leads to the activation of the transcription factor AP-1. By retaining the phosphatase complex PP2A into the cytoplasm, prevents the dephosphorylation of the AP-1 subunit JUN which is required for proper activation of the transcription factor. Both inhibits and activates the TLR2-dependent signaling pathway. Positively regulates the TLR2 signaling pathway to activate specifically the downstream p38 and JNK MAP kinases and promote the polarization of macrophages toward the pro-inflammatory M1 phenotype. It may also play a role in the regulation of inflammation induced by high glucose through the PKB/AKT signaling pathway. Also involved in erythrocyte differentiation through activation of the ERK1/ERK2 signaling pathway. This is Malignant fibrous histiocytoma-amplified sequence 1 from Homo sapiens (Human).